A 365-amino-acid chain; its full sequence is Embryonic developmental protein tofu-6 (365 aa).

Positions 13–90 constitute an RRM domain; the sequence is AGFHIRNVPK…YSLKVSDHKN (78 aa).

Its function is as follows. Required maternally for early embryonic cell divisions. May have a role in DNA replication. In Caenorhabditis briggsae, this protein is Embryonic developmental protein tofu-6.